A 798-amino-acid chain; its full sequence is Iron-regulated transcriptional activator AFT2 (798 aa).

Disordered regions lie at residues 142-274 (RSNK…KKLK), 331-365 (YPQP…QENN), 449-545 (NVDL…LPGS), 642-718 (QQQQ…NNIN), and 748-798 (QGNP…GPGW). Residues 153-165 (EIANTPSVTSYSP) show a composition bias toward polar residues. Residues 193–223 (STQSTRSSSSSDGSSIVSFGSLTSQSSSTSL) are compositionally biased toward low complexity. Positions 256–274 (PVKRKNMKANTMKKSKKLK) are enriched in basic residues. Positions 449–460 (NVDLEQNGSNEN) are enriched in polar residues. A compositionally biased stretch (low complexity) spans 476–517 (ENQFSYQSQIQNQRQNQNQNQGQNQNQNQSQSQTPGQNSNQN). Composition is skewed to polar residues over residues 518–543 (DSQT…NWLP) and 646–656 (PMFSMQNSGQQ). Low complexity-rich tracts occupy residues 657-695 (LPPL…TLNP) and 705-718 (NSTN…NNIN). Residues 748–773 (QGNPTNSNQSMVNSIMTTNSNKDGTA) are compositionally biased toward polar residues. Residues 774-789 (TSNNNSSGNTSNNLLN) are compositionally biased toward low complexity.

It is found in the nucleus. Transcription factor involved in iron metabolism, oxidative stress, surface adhesion, hyphal development and virulence. Functions as a negative regulator of MRS4 expression through the CACCC AFT-type sequence in a gene dose-dependent fashion. Acts as a repressor in flocculation, plastic adhesion, and surface hydrophobicity. The sequence is that of Iron-regulated transcriptional activator AFT2 (AFT2) from Candida albicans (strain SC5314 / ATCC MYA-2876) (Yeast).